Consider the following 624-residue polypeptide: Double-stranded RNA-binding protein Staufen homolog 2 (624 aa).

5 DRBM domains span residues 55 to 122, 142 to 228, 254 to 321, 354 to 422, and 540 to 604; these read STSI…NGLA, QRAN…SEIS, MKSF…PEYG, RRRE…IADQ, and LTCL…EKAD. Residues 197–223 form a disordered region; it reads LRNEPIPERSSLNGEANRGPEEDKDAN. Residues 214–223 are compositionally biased toward basic and acidic residues; it reads RGPEEDKDAN. Disordered stretches follow at residues 401–428 and 592–624; these read EKTGKRGENPDWDEQNSGIADQTSTPKG and PFEQAKLRGEKADNKQANSGTIAQDCKDSKAVV. Residues 415–426 are compositionally biased toward polar residues; that stretch reads QNSGIADQTSTP. Over residues 596 to 605 the composition is skewed to basic and acidic residues; that stretch reads AKLRGEKADN.

Its function is as follows. RNA-binding protein required for the microtubule-dependent transport of RNAs within polarized cell types. The chain is Double-stranded RNA-binding protein Staufen homolog 2 (stau2) from Xenopus tropicalis (Western clawed frog).